The following is a 470-amino-acid chain: MIKIYNTMSRTKETFKPLVDHKVSMYVCGPTVYNYIHIGNARSIIAFDTIRRYFEYRGFEVKFVSNFTDVDDKMINSAREQGITVPELADRYIGAFKEDVQAVNVEPATLNPRATENIDDIIAFIADLMDKGFAYAVDGDVYYRARKFSKYGALSHQNIDELEQGASQHVDDEETARKEDPIDFALWKAAKGDEIAWKAPWGTGRPGWHIECSVMSTKYLGDTFDIHGGGEDLQFPHHENEIAQSEAKTGKQFARYWMHNGFVTVGDDNEKMSKSLGNFVTVHDLVQKINPQVLRFLMSTTQYRRPIQYTQASLQDAKNNLEKLQNAFINLNYRLQGAQGAADATVAEQAAQLETDFITAMDDDFNAQNGITVVYEFARLINVYSEKTAVNAEQINQLLTSYAKMAAVFGIELKQIENDDAEIDELVKQRDQARADRDFETSDRLRNQLKEMGVILEDTPQGTRWRKKDE.

Residue cysteine 28 coordinates Zn(2+). The 'HIGH' region motif lies at 30–40 (PTVYNYIHIGN). The Zn(2+) site is built by cysteine 212, histidine 237, and glutamate 241. A 'KMSKS' region motif is present at residues 271–275 (KMSKS). Position 274 (lysine 274) interacts with ATP.

Belongs to the class-I aminoacyl-tRNA synthetase family. As to quaternary structure, monomer. Zn(2+) serves as cofactor.

The protein resides in the cytoplasm. The catalysed reaction is tRNA(Cys) + L-cysteine + ATP = L-cysteinyl-tRNA(Cys) + AMP + diphosphate. This is Cysteine--tRNA ligase from Pediococcus pentosaceus (strain ATCC 25745 / CCUG 21536 / LMG 10740 / 183-1w).